A 417-amino-acid chain; its full sequence is 4-hydroxy-3-methylbut-2-en-1-yl diphosphate synthase (flavodoxin) (417 aa).

Cys307, Cys310, Cys353, and Glu360 together coordinate [4Fe-4S] cluster.

Belongs to the IspG family. The cofactor is [4Fe-4S] cluster.

It catalyses the reaction (2E)-4-hydroxy-3-methylbut-2-enyl diphosphate + oxidized [flavodoxin] + H2O + 2 H(+) = 2-C-methyl-D-erythritol 2,4-cyclic diphosphate + reduced [flavodoxin]. The protein operates within isoprenoid biosynthesis; isopentenyl diphosphate biosynthesis via DXP pathway; isopentenyl diphosphate from 1-deoxy-D-xylulose 5-phosphate: step 5/6. In terms of biological role, converts 2C-methyl-D-erythritol 2,4-cyclodiphosphate (ME-2,4cPP) into 1-hydroxy-2-methyl-2-(E)-butenyl 4-diphosphate. The chain is 4-hydroxy-3-methylbut-2-en-1-yl diphosphate synthase (flavodoxin) from Xylella fastidiosa (strain 9a5c).